The primary structure comprises 153 residues: Cystatin-9 (153 aa).

The first 27 residues, 1–27 (MGRQRRCRWAQPWTLLLLLLGPRLLVT), serve as a signal peptide directing secretion.

It belongs to the cystatin family.

It localises to the secreted. Its function is as follows. May play a role in hematopoietic differentiation or inflammation. In Bos taurus (Bovine), this protein is Cystatin-9 (CST9).